The sequence spans 117 residues: Minor capsid protein VP2 (117 aa).

This sequence belongs to the lagovirus VP2 protein family. Homooligomer. The portal-like structure consists in 12 copies of VP2. Interacts with capsid protein VP1.

It localises to the virion. The protein resides in the host cytoplasm. In terms of biological role, minor structural protein that forms a portal-like structure at a unique three-fold axis of symmetry, following binding to the host receptor. The channel formed by VP2 may allow the delivery of the viral genome through the host endosomal membrane. This chain is Minor capsid protein VP2, found in Rabbit hemorrhagic disease virus (strain AST89) (Ra/LV/RHDV/AST89/1989/SP).